Here is a 493-residue protein sequence, read N- to C-terminus: UDP-N-acetylmuramoyl-L-alanyl-D-glutamate--2,6-diaminopimelate ligase (493 aa).

The UDP-N-acetyl-alpha-D-muramoyl-L-alanyl-D-glutamate site is built by leucine 30 and serine 32. Residue 117–123 (GTNGKTT) participates in ATP binding. Residues asparagine 158, 159 to 160 (TT), serine 186, glutamine 192, and arginine 194 each bind UDP-N-acetyl-alpha-D-muramoyl-L-alanyl-D-glutamate. Lysine 226 is subject to N6-carboxylysine. Residues arginine 388, 412–415 (DNPR), glycine 463, and glutamate 467 contribute to the meso-2,6-diaminopimelate site. The Meso-diaminopimelate recognition motif signature appears at 412–415 (DNPR).

The protein belongs to the MurCDEF family. MurE subfamily. Mg(2+) serves as cofactor. Post-translationally, carboxylation is probably crucial for Mg(2+) binding and, consequently, for the gamma-phosphate positioning of ATP.

Its subcellular location is the cytoplasm. It carries out the reaction UDP-N-acetyl-alpha-D-muramoyl-L-alanyl-D-glutamate + meso-2,6-diaminopimelate + ATP = UDP-N-acetyl-alpha-D-muramoyl-L-alanyl-gamma-D-glutamyl-meso-2,6-diaminopimelate + ADP + phosphate + H(+). Its pathway is cell wall biogenesis; peptidoglycan biosynthesis. Catalyzes the addition of meso-diaminopimelic acid to the nucleotide precursor UDP-N-acetylmuramoyl-L-alanyl-D-glutamate (UMAG) in the biosynthesis of bacterial cell-wall peptidoglycan. This Vibrio vulnificus (strain YJ016) protein is UDP-N-acetylmuramoyl-L-alanyl-D-glutamate--2,6-diaminopimelate ligase.